The sequence spans 225 residues: ATP-dependent dethiobiotin synthetase BioD (225 aa).

12 to 17 contacts ATP; sequence EVGKTY. Residue Thr-16 participates in Mg(2+) binding. Residue Lys-37 is part of the active site. Ser-41 is a substrate binding site. ATP-binding positions include Asp-52, 114 to 117, and 174 to 175; these read EGAG and NC. Asp-52 and Glu-114 together coordinate Mg(2+).

The protein belongs to the dethiobiotin synthetase family. Homodimer. The cofactor is Mg(2+).

It localises to the cytoplasm. It carries out the reaction (7R,8S)-7,8-diammoniononanoate + CO2 + ATP = (4R,5S)-dethiobiotin + ADP + phosphate + 3 H(+). It functions in the pathway cofactor biosynthesis; biotin biosynthesis; biotin from 7,8-diaminononanoate: step 1/2. Catalyzes a mechanistically unusual reaction, the ATP-dependent insertion of CO2 between the N7 and N8 nitrogen atoms of 7,8-diaminopelargonic acid (DAPA, also called 7,8-diammoniononanoate) to form a ureido ring. The sequence is that of ATP-dependent dethiobiotin synthetase BioD from Francisella tularensis subsp. novicida (strain U112).